A 472-amino-acid polypeptide reads, in one-letter code: WD repeat-containing protein 88 (472 aa).

The disordered stretch occupies residues 1 to 22 (MASPPRCSPTAHDRECKLPPPS). WD repeat units follow at residues 100-139 (GHEHAVSTCHFCVDDTKLLSGSYDCTVKLWDPVDGSVVRD), 143-182 (RPKAPVVECSITGDSSRVIAASYDKTVRAWDLETGKLLWK), 184-224 (RYDT…TVSV), 228-267 (HHTRSITSCCFDPDSQRVASVSLDRCIKIWDVTSQATLLT), 271-310 (AHSNAISNCCFTFSGHFLCTSSWDKNLKIWNVHTGEFRNC), 319-358 (GHEGSVSSCHFARDSSFLISGGFDRTVAIWDVAEGYRKLS), and 361-400 (GHNDWVMDVAISNNKKWILSASKDRTMRLWNIEEIDEIPL). The disordered stretch occupies residues 447–472 (LPADTSSSSSSSERENSPPPRGSKDD). Over residues 458-472 (SERENSPPPRGSKDD) the composition is skewed to basic and acidic residues.

This is WD repeat-containing protein 88 (WDR88) from Homo sapiens (Human).